A 1339-amino-acid chain; its full sequence is Transcription factor tau subunit sfc3 (1339 aa).

The interval 470–515 is disordered; it reads MESNAEVSPDGMTLLPRKRGRPRKSANISVTSSPIRPSKNENNLPS. A DNA-binding region (a.T hook) is located at residues 485–497; the sequence is PRKRGRPRKSANI. A compositionally biased stretch (polar residues) spans 495-514; sequence ANISVTSSPIRPSKNENNLP. A phosphoserine mark is found at serine 595 and serine 596. A disordered region spans residues 791–826; that stretch reads RRKSMPAEIKRHKESSETKPVDKEEVKKNEKEKDDP. Over residues 798–826 the composition is skewed to basic and acidic residues; the sequence is EIKRHKESSETKPVDKEEVKKNEKEKDDP.

Component of the TFIIIC complex including sfc1, sfc3, sfc4, sfc6 and sfc7. The subunits are organized in two globular domains, tauA and tauB, connected by a proteolysis-sensitive and flexible linker. Interacts with sfc1, sfc4 and sfc6.

The protein resides in the nucleus envelope. Its function is as follows. TFIIIC mediates tRNA and 5S RNA gene activation by binding to intragenic promoter elements. Upstream of the transcription start site, TFIIIC assembles the initiation complex TFIIIB-TFIIIC-tDNA, which is sufficient for RNA polymerase III recruitment and function. Part of the tauB domain of TFIIIC that binds boxB DNA promoter sites of tRNA and similar genes. Cooperates with sfc6 in DNA binding. Localizes to chromatin insulator sequence without recruiting RNA polymerase III and plays a role in nuclear organization. The chain is Transcription factor tau subunit sfc3 from Schizosaccharomyces pombe (strain 972 / ATCC 24843) (Fission yeast).